The primary structure comprises 307 residues: 4-hydroxybenzoate octaprenyltransferase (307 aa).

A run of 7 helical transmembrane segments spans residues 27 to 47 (AGWL…AGGF), 50 to 70 (WHLL…GCCI), 101 to 121 (LAVG…TNAL), 142 to 162 (CVAM…PMAF), 179 to 199 (AAVP…VLAY), 239 to 259 (LLAW…AAGL), and 285 to 305 (FRLN…DLGW).

It belongs to the UbiA prenyltransferase family. Mg(2+) serves as cofactor.

Its subcellular location is the cell inner membrane. The catalysed reaction is all-trans-octaprenyl diphosphate + 4-hydroxybenzoate = 4-hydroxy-3-(all-trans-octaprenyl)benzoate + diphosphate. The protein operates within cofactor biosynthesis; ubiquinone biosynthesis. Its function is as follows. Catalyzes the prenylation of para-hydroxybenzoate (PHB) with an all-trans polyprenyl group. Mediates the second step in the final reaction sequence of ubiquinone-8 (UQ-8) biosynthesis, which is the condensation of the polyisoprenoid side chain with PHB, generating the first membrane-bound Q intermediate 3-octaprenyl-4-hydroxybenzoate. This is 4-hydroxybenzoate octaprenyltransferase from Methylibium petroleiphilum (strain ATCC BAA-1232 / LMG 22953 / PM1).